The following is a 365-amino-acid chain: 3-dehydroquinate synthase (365 aa).

Residues 106–110 (GVIGD), 130–131 (TT), Lys-142, Lys-151, and 169–172 (FFAT) each bind NAD(+). Positions 184, 247, and 264 each coordinate Zn(2+).

Belongs to the sugar phosphate cyclases superfamily. Dehydroquinate synthase family. It depends on Co(2+) as a cofactor. The cofactor is Zn(2+). NAD(+) is required as a cofactor.

The protein resides in the cytoplasm. The catalysed reaction is 7-phospho-2-dehydro-3-deoxy-D-arabino-heptonate = 3-dehydroquinate + phosphate. The protein operates within metabolic intermediate biosynthesis; chorismate biosynthesis; chorismate from D-erythrose 4-phosphate and phosphoenolpyruvate: step 2/7. Functionally, catalyzes the conversion of 3-deoxy-D-arabino-heptulosonate 7-phosphate (DAHP) to dehydroquinate (DHQ). This Listeria monocytogenes serotype 4a (strain HCC23) protein is 3-dehydroquinate synthase.